The sequence spans 208 residues: ATP-dependent Clp protease proteolytic subunit (208 aa).

S107 acts as the Nucleophile in catalysis. The active site involves H132.

Belongs to the peptidase S14 family. Fourteen ClpP subunits assemble into 2 heptameric rings which stack back to back to give a disk-like structure with a central cavity, resembling the structure of eukaryotic proteasomes.

The protein localises to the cytoplasm. The enzyme catalyses Hydrolysis of proteins to small peptides in the presence of ATP and magnesium. alpha-casein is the usual test substrate. In the absence of ATP, only oligopeptides shorter than five residues are hydrolyzed (such as succinyl-Leu-Tyr-|-NHMec, and Leu-Tyr-Leu-|-Tyr-Trp, in which cleavage of the -Tyr-|-Leu- and -Tyr-|-Trp bonds also occurs).. Functionally, cleaves peptides in various proteins in a process that requires ATP hydrolysis. Has a chymotrypsin-like activity. Plays a major role in the degradation of misfolded proteins. This is ATP-dependent Clp protease proteolytic subunit from Jannaschia sp. (strain CCS1).